The chain runs to 33 residues: Antimicrobial peptide MBP-1 (33 aa).

In terms of tissue distribution, predominantly in the embryo portion of the kernel.

It is found in the secreted. Inhibitor of both bacterial and fungal growth in vitro. This chain is Antimicrobial peptide MBP-1, found in Zea mays (Maize).